The following is a 107-amino-acid chain: MEPYAVVQTGNKQYQVRKGDVIDVELLDGISEENKEVLFQEVLFVFDGEKASVGSPTVGNAVVKGELISFVRGEKVVAYKYKKRKNYHKKIGHRQNYLRVKICDLVM.

It belongs to the bacterial ribosomal protein bL21 family. In terms of assembly, part of the 50S ribosomal subunit. Contacts protein L20.

This protein binds to 23S rRNA in the presence of protein L20. The chain is Large ribosomal subunit protein bL21 from Chlamydia muridarum (strain MoPn / Nigg).